Consider the following 47-residue polypeptide: Defensin NsD7 (47 aa).

Intrachain disulfides connect Cys-3–Cys-47, Cys-14–Cys-34, Cys-20–Cys-41, and Cys-24–Cys-43. 4 residues coordinate a 1,2-diacyl-sn-glycero-3-phosphate: Lys-4, His-33, Lys-36, and Arg-39.

Belongs to the DEFL family. In terms of assembly, in the presence of phosphatidic acid (PA), forms right-handed double helices which tend to bundle into fibrils. Each helix is a repetition of dimers containing 2 bound molecules of PA per dimer. Dimers are arranged orthogonally in a tip-to-tip configuration with 1 molecule of PA located at the dimer contact interface. Association of 2 helices to form a double helix depends on intercalating isoleucine residues Ile-15 and Ile-37. Bundling of double helices into fibrils depends on Arg-26.

Its subcellular location is the vacuole. Its function is as follows. Plant defense peptide. Disrupts membranes containing phosphatidic acid (PA) via a PA-dependent oligomerization process. In Nicotiana suaveolens (Australian tobacco), this protein is Defensin NsD7.